The following is a 221-amino-acid chain: Histidine biosynthesis bifunctional protein HisIE (221 aa).

The interval 1 to 129 is phosphoribosyl-AMP cyclohydrolase; the sequence is MAYSKNFSIE…AKKTSPFSNI (129 aa). Residues 130-221 form a phosphoribosyl-ATP pyrophosphohydrolase region; the sequence is CSELFDTLHE…VLESRRGKNN (92 aa).

It in the N-terminal section; belongs to the PRA-CH family. In the C-terminal section; belongs to the PRA-PH family.

The protein resides in the cytoplasm. It catalyses the reaction 1-(5-phospho-beta-D-ribosyl)-ATP + H2O = 1-(5-phospho-beta-D-ribosyl)-5'-AMP + diphosphate + H(+). The enzyme catalyses 1-(5-phospho-beta-D-ribosyl)-5'-AMP + H2O = 1-(5-phospho-beta-D-ribosyl)-5-[(5-phospho-beta-D-ribosylamino)methylideneamino]imidazole-4-carboxamide. Its pathway is amino-acid biosynthesis; L-histidine biosynthesis; L-histidine from 5-phospho-alpha-D-ribose 1-diphosphate: step 2/9. It functions in the pathway amino-acid biosynthesis; L-histidine biosynthesis; L-histidine from 5-phospho-alpha-D-ribose 1-diphosphate: step 3/9. The sequence is that of Histidine biosynthesis bifunctional protein HisIE from Prochlorococcus marinus subsp. pastoris (strain CCMP1986 / NIES-2087 / MED4).